Here is a 650-residue protein sequence, read N- to C-terminus: MTKTTKKFETEVQQLLDLVIHSLYSNKDIFLRELISNSSDAIDKVLFEAHQNAAVIEGEPEGKIKLIPDKEAGTITIRDNGVGMTMEEVEKNIGTIAHSGTKAFLANLKEQNVSEHPELIGQFGVGFYASFMVADRVTLVTRRAGQDKAAGVRWESTGDGTYTVEEAVKETRGTEITLHLKEEMKEYLDEWKIRSIVRKYSDYVQYPVVMDVTRTEVPKGVNGEEIEGAGTIEKTVEETLNSMKAIWARAKSEVTEEEYEEFYKHVSHDFEKPLKTIHYSAEGVSEFKALLYLPAHKPFDLFMPERKKGVQLYVRRVFITDSCEQLIPDYLRFVKGVVDSSDLPLNVSREILQEDVQIKRIQKSLVSKIISTLSEMREKEADDYLAFYKEFGQVLKEGVHFDYANREKLQDLLLFESTRTEAGKFTSLKEYVERMPAGQEEIYFITGTSRTALEQSPHLEIFRKKEYEVLFLTDPVDEWVVQGVTEYDGKKLKAVDRGDVIPATEEEKKEQEAKREEAFKQYGDLLSFVKEKLDARVKEVRLSSRLTDSACCLVADEHGLNANMERILRAMNQDVPESKRILELNPDHPLMQVMANLFARDKANPRLGDYCDLLYDQALLTEGSPISDPLRFTRLVAELMVADGKAAAGE.

The segment at Met1–Arg349 is a; substrate-binding. Residues Glu350 to Arg566 are b. Residues Ile567–Glu650 are c.

The protein belongs to the heat shock protein 90 family. Homodimer.

Its subcellular location is the cytoplasm. Molecular chaperone. Has ATPase activity. This Geobacter metallireducens (strain ATCC 53774 / DSM 7210 / GS-15) protein is Chaperone protein HtpG.